Here is an 840-residue protein sequence, read N- to C-terminus: Radial spoke head 10 homolog B (840 aa).

Basic and acidic residues-rich tracts occupy residues 1 to 16 (MVKE…DKSA) and 51 to 63 (QPKD…EVKS). Residues 1–74 (MVKEKKKADK…SLPNEDTTQY (74 aa)) form a disordered region. MORN repeat units follow at residues 86–108 (SYEG…QGGC), 109–131 (TYQG…ADGL), 132–154 (KYEG…PDGS), 155–177 (TYEG…STQP), 179–201 (SYIG…NQEG), 204–226 (WYEG…KSGN), 227–249 (IYEG…LTTN), 251–273 (EYTG…FLKR), 284–306 (EYVG…ASGA), and 307–329 (MYEG…KNGR). A coiled-coil region spans residues 758–801 (KEKVKENRLHNEAMALQRKMENEELEARLNSLREEEAKRQDYEV). The interval 810–840 (VDAPSSSFTPSPPKEDTVVSSKSITSKKKKK) is disordered.

As to quaternary structure, interacts with RSPH6A. Does not appear to be part of the axonemal radial spoke complexes 1 or 2.

The protein resides in the cytoplasm. Its subcellular location is the cytoskeleton. It is found in the cilium axoneme. The protein localises to the cell projection. It localises to the cilium. The protein resides in the flagellum. May function as part of the axonemal radial spoke complex 3 (RS3). Radial spoke complexes are important for ciliary motility. This chain is Radial spoke head 10 homolog B (RSPH10B), found in Bos taurus (Bovine).